The primary structure comprises 941 residues: Isoleucine--tRNA ligase (941 aa).

The 'HIGH' region signature appears at 58-68; that stretch reads PYANGDIHIGH. Residue Glu563 coordinates L-isoleucyl-5'-AMP. The 'KMSKS' region motif lies at 604–608; it reads KMSKS. Lys607 contacts ATP. Zn(2+)-binding residues include Cys904, Cys907, Cys924, and Cys927.

Belongs to the class-I aminoacyl-tRNA synthetase family. IleS type 1 subfamily. In terms of assembly, monomer. Requires Zn(2+) as cofactor.

It localises to the cytoplasm. The catalysed reaction is tRNA(Ile) + L-isoleucine + ATP = L-isoleucyl-tRNA(Ile) + AMP + diphosphate. Functionally, catalyzes the attachment of isoleucine to tRNA(Ile). As IleRS can inadvertently accommodate and process structurally similar amino acids such as valine, to avoid such errors it has two additional distinct tRNA(Ile)-dependent editing activities. One activity is designated as 'pretransfer' editing and involves the hydrolysis of activated Val-AMP. The other activity is designated 'posttransfer' editing and involves deacylation of mischarged Val-tRNA(Ile). This chain is Isoleucine--tRNA ligase, found in Halorhodospira halophila (strain DSM 244 / SL1) (Ectothiorhodospira halophila (strain DSM 244 / SL1)).